We begin with the raw amino-acid sequence, 241 residues long: Proteasome subunit alpha (241 aa).

The protein belongs to the peptidase T1A family. In terms of assembly, the 20S proteasome core is composed of 14 alpha and 14 beta subunits that assemble into four stacked heptameric rings, resulting in a barrel-shaped structure. The two inner rings, each composed of seven catalytic beta subunits, are sandwiched by two outer rings, each composed of seven alpha subunits. The catalytic chamber with the active sites is on the inside of the barrel. Has a gated structure, the ends of the cylinder being occluded by the N-termini of the alpha-subunits. Is capped by the proteasome-associated ATPase, ARC.

It is found in the cytoplasm. The protein operates within protein degradation; proteasomal Pup-dependent pathway. Its activity is regulated as follows. The formation of the proteasomal ATPase ARC-20S proteasome complex, likely via the docking of the C-termini of ARC into the intersubunit pockets in the alpha-rings, may trigger opening of the gate for substrate entry. Interconversion between the open-gate and close-gate conformations leads to a dynamic regulation of the 20S proteasome proteolysis activity. In terms of biological role, component of the proteasome core, a large protease complex with broad specificity involved in protein degradation. This is Proteasome subunit alpha from Parafrankia sp. (strain EAN1pec).